The chain runs to 56 residues: Zinc finger mu-protein HVO_0758 (56 aa).

C23, C26, C45, and C48 together coordinate Zn(2+). 2 short sequence motifs (c(P)XCG motif) span residues 23-27 (CSECG) and 45-49 (CADCG).

In terms of assembly, monomer.

Its function is as follows. Zinc-binding protein that binds one zinc ion. Is involved in biofilm formation, swarming and glycerol metabolism regulation. This Haloferax volcanii (strain ATCC 29605 / DSM 3757 / JCM 8879 / NBRC 14742 / NCIMB 2012 / VKM B-1768 / DS2) (Halobacterium volcanii) protein is Zinc finger mu-protein HVO_0758.